A 69-amino-acid polypeptide reads, in one-letter code: Large ribosomal subunit protein bL31 (69 aa).

This sequence belongs to the bacterial ribosomal protein bL31 family. Type A subfamily. Part of the 50S ribosomal subunit.

Functionally, binds the 23S rRNA. The protein is Large ribosomal subunit protein bL31 of Magnetococcus marinus (strain ATCC BAA-1437 / JCM 17883 / MC-1).